A 310-amino-acid polypeptide reads, in one-letter code: UPF0761 membrane protein VF_0100 (310 aa).

6 consecutive transmembrane segments (helical) span residues 34-54 (YMAYITLLSLVPLITVLLSVL), 97-117 (MTAVGSGFLFVASVMLISSID), 136-156 (FSLYWMILTLGPLLVGASLAA), 178-198 (LLGWLPIILSFSAFVGLYLLV), 207-227 (HALIGAMSAGCLFEFSKVGFA), and 242-262 (ALAAVPILFVWVYLCWIIVLI).

The protein belongs to the UPF0761 family.

It localises to the cell inner membrane. The polypeptide is UPF0761 membrane protein VF_0100 (Aliivibrio fischeri (strain ATCC 700601 / ES114) (Vibrio fischeri)).